A 377-amino-acid polypeptide reads, in one-letter code: Nitric oxide reductase FlRd-NAD(+) reductase (377 aa).

Belongs to the FAD-dependent oxidoreductase family. FAD serves as cofactor.

Its subcellular location is the cytoplasm. It carries out the reaction 2 reduced [nitric oxide reductase rubredoxin domain] + NAD(+) + H(+) = 2 oxidized [nitric oxide reductase rubredoxin domain] + NADH. It functions in the pathway nitrogen metabolism; nitric oxide reduction. Functionally, one of at least two accessory proteins for anaerobic nitric oxide (NO) reductase. Reduces the rubredoxin moiety of NO reductase. This is Nitric oxide reductase FlRd-NAD(+) reductase from Escherichia coli O6:K15:H31 (strain 536 / UPEC).